A 614-amino-acid chain; its full sequence is Zinc finger and SCAN domain-containing protein 2 (614 aa).

Disordered regions lie at residues 1-26 and 43-76; these read MMAA…EDRQ and EAVL…PQGA. The SCAN box domain maps to 59–132; sequence SAGKGGPQEE…ALVEDLTQTL (74 aa). 14 C2H2-type zinc fingers span residues 222 to 244, 250 to 272, 278 to 300, 306 to 328, 334 to 356, 362 to 384, 390 to 412, 418 to 440, 446 to 468, 474 to 496, 502 to 524, 530 to 552, 558 to 580, and 586 to 608; these read YECP…ERTH, YKCD…QTTH, YKCR…QRIH, FQCA…QRTH, YSCP…QGIH, YECK…QRIH, YKCT…RRTH, YQCS…RRTH, YKCG…QGMH, YECL…QRIH, YKCS…QRTH, YKCL…QRAH, YRCP…QRIH, and YKCP…QRTH.

It belongs to the krueppel C2H2-type zinc-finger protein family.

The protein resides in the nucleus. May be involved in transcriptional regulation during the post-meiotic stages of spermatogenesis. The protein is Zinc finger and SCAN domain-containing protein 2 (ZSCAN2) of Homo sapiens (Human).